A 108-amino-acid chain; its full sequence is Large ribosomal subunit protein uL23 (108 aa).

This sequence belongs to the universal ribosomal protein uL23 family. As to quaternary structure, part of the 50S ribosomal subunit. Contacts protein L29, and trigger factor when it is bound to the ribosome.

Its function is as follows. One of the early assembly proteins it binds 23S rRNA. One of the proteins that surrounds the polypeptide exit tunnel on the outside of the ribosome. Forms the main docking site for trigger factor binding to the ribosome. The sequence is that of Large ribosomal subunit protein uL23 from Polaromonas naphthalenivorans (strain CJ2).